A 1270-amino-acid polypeptide reads, in one-letter code: MGTKWTEEQELAINTRKCNLLVAAAAGSGKTAVLVERIIKMITEGENPVDIDKLLVVTFTNAAASEMRERIGDAISKALEKDPSSEVLQRQLALLNRASITTMHSFCLEVIKNNFHLIDLDPGFRIGDQTECELIKQDILADLFEDMYAKDDECFKDLVEAYGGSKSDDNLNSIILKFYNFIMSGPWPESWLKDKVEEFNINSIEELEGKKWIEVLKESIILDLNNAYSMLTQARDIAEMGGGLEPYLVNIYPEIIQVEELRIALSEGIVKFYNKLMGASFGRLKSVRKASVDDEKALEKTKSLRDESKKIIENLRDNVFETSLEEAVLGMKKMYPLMKCLSGLIIEFSNRYRDKKREKDILDFNDLEHLCLEILIDKDEEGNIKPSQVALEFKDKFEEVLVDEYQDSNTIQETIVGMVSRRDVENPNVFMVGDVKQSIYKFRQANPELFLEKYINYREFEDSNRKIMLYKNFRSREEIINGVNYIFKTLMSNTVGELEYDEKEALNLGASYGELNEENVEKEYIDEIENLKVAGDIELNILNKAGNKDYSDDELGEEEEDLDSIQLEARIIGKKINELMNPEDGSHYMVFDKDLGKYRKIKYKDIVILLRATKNWADTFVDELGTYGIPVYADTGTGYFQTIEIRTILALLHIIDNPMQDIYILSSLRSPIFSFTSEEFADLRLLNKDKYFFEIIKEVVDGIYDESISKDLKGKCKYFLDYLNKWREKAAYMPIDEFIWFLYSDTSYYGYVGTMPNGVQRQANLRILFQRAKQYESTSFKGLFNFINFINKLKKSSGDMGSAKILGENENVVRIMSIHKSKGLEFPVVILGGTGKQFNKMDLREDILLHETLGIGTNCIDVKKRIKYDTLQKHAIKKKCELEVLSEEMRILYVAFTRAKEKLIITGAVSDLEKSCENWCKASASSEDNRINPGNVLKGKSYLDWIGMALTKHKDGDAIRNVGNGDITLNLDDKSNWSFKSFDRSELLETNNNKKEKNNIDIFESNNWIESKKDIKEVIEIRNRLGFKYKYIESCNTPSNISVTELKRAHQEEEFMQESYNIIDNESSEENKKEKIKRKPRFMEERQEEFSAAKKGTITHFVMQHIDLDKVTYIDEIREEVLKMVKKELLTEEEGKVVNVFKIQKFFKSELGQRMLSSYKSGKKVYRELPFITEIPSSIIEKNLDPKIYGEEKVRLQGIIDAFFEEEDGYVLLDYKTDYVKEGEEEAFINKYKIQINLYKDTLNKILGEEVKEAYLYSFYLEKELKISKE.

One can recognise a UvrD-like helicase ATP-binding domain in the interval 3–476 (TKWTEEQELA…IMLYKNFRSR (474 aa)). An ATP-binding site is contributed by 24–31 (AAAGSGKT). Positions 528-823 (IENLKVAGDI…RIMSIHKSKG (296 aa)) constitute a UvrD-like helicase C-terminal domain.

Belongs to the helicase family. AddA subfamily. Heterodimer of AddA and AddB/RexB. The cofactor is Mg(2+).

The enzyme catalyses Couples ATP hydrolysis with the unwinding of duplex DNA by translocating in the 3'-5' direction.. It catalyses the reaction ATP + H2O = ADP + phosphate + H(+). Its function is as follows. The heterodimer acts as both an ATP-dependent DNA helicase and an ATP-dependent, dual-direction single-stranded exonuclease. Recognizes the chi site generating a DNA molecule suitable for the initiation of homologous recombination. The AddA nuclease domain is required for chi fragment generation; this subunit has the helicase and 3' -&gt; 5' nuclease activities. The sequence is that of ATP-dependent helicase/nuclease subunit A from Clostridium perfringens (strain SM101 / Type A).